The chain runs to 356 residues: Palmitoyltransferase swf1 (356 aa).

The Lumenal portion of the chain corresponds to 1–2; that stretch reads MD. Residues 3 to 23 form a helical membrane-spanning segment; the sequence is FFYKYLALVAIASLMVFILLF. At 24–78 the chain is on the cytoplasmic side; sequence GQIPKLKYTVIGKLNRFFMVTIPYHLHVLDSRYADGRCSAAMRSLSNYVLYKNNP. A helical transmembrane segment spans residues 79 to 99; that stretch reads LVVFLYLALITIGIASFFIYG. Over 100-107 the chain is Lumenal; the sequence is SSLTQKFS. The helical transmembrane segment at 108 to 128 threads the bilayer; the sequence is IIDWISVLTSVLLPYISLYIA. Over 129-201 the chain is Cytoplasmic; it reads AKSNPGKIDL…NNCVGLNNAR (73 aa). Residues 158–208 form the DHHC domain; it reads NKCSTCKFEKPARSKHCRLCNICVEKFDHHCIWINNCVGLNNARYFFLFLL. Residues 202-222 traverse the membrane as a helical segment; that stretch reads YFFLFLLCTIQLLFHSILRLG. Residues 223 to 253 are Lumenal-facing; the sequence is YHFNALRDMRQYPSFLRSWWFAIKSEGELGS. Residues 254–274 traverse the membrane as a helical segment; it reads VFLISLICSVLVLCLLGYEFF. Over 275–356 the chain is Cytoplasmic; it reads LVYAGYTTNE…FPYRHLYSTT (82 aa).

This sequence belongs to the DHHC palmitoyltransferase family. SWF1 subfamily.

The protein localises to the endoplasmic reticulum membrane. The catalysed reaction is L-cysteinyl-[protein] + hexadecanoyl-CoA = S-hexadecanoyl-L-cysteinyl-[protein] + CoA. In terms of biological role, palmitoyltransferase that targets several endosomal SNAREs. Palmitoylates the SNAREs at cysteine residues close to the cytoplasmic end of their transmembrane domain. May have a role in the cellular quality control of transmembrane domain-containing proteins. The chain is Palmitoyltransferase swf1 (swf1) from Schizosaccharomyces pombe (strain 972 / ATCC 24843) (Fission yeast).